The following is a 469-amino-acid chain: 3-isopropylmalate dehydratase large subunit (469 aa).

[4Fe-4S] cluster is bound by residues C350, C410, and C413.

This sequence belongs to the aconitase/IPM isomerase family. LeuC type 1 subfamily. As to quaternary structure, heterodimer of LeuC and LeuD. [4Fe-4S] cluster serves as cofactor.

It carries out the reaction (2R,3S)-3-isopropylmalate = (2S)-2-isopropylmalate. It functions in the pathway amino-acid biosynthesis; L-leucine biosynthesis; L-leucine from 3-methyl-2-oxobutanoate: step 2/4. In terms of biological role, catalyzes the isomerization between 2-isopropylmalate and 3-isopropylmalate, via the formation of 2-isopropylmaleate. The polypeptide is 3-isopropylmalate dehydratase large subunit (Rhizobium johnstonii (strain DSM 114642 / LMG 32736 / 3841) (Rhizobium leguminosarum bv. viciae)).